The following is a 288-amino-acid chain: AA9 family lytic polysaccharide monooxygenase A (288 aa).

Positions 1–22 (MKSTSATKFSVLAAATFAAAHG) are cleaved as a signal peptide. Histidine 21 and histidine 104 together coordinate Cu(2+). 2 disulfide bridges follow: cysteine 74/cysteine 191 and cysteine 115/cysteine 119. Asparagine 151 carries an N-linked (GlcNAc...) asparagine glycan. Residues histidine 177 and glutamine 186 each coordinate O2. Tyrosine 188 provides a ligand contact to Cu(2+). The disordered stretch occupies residues 236–270 (PEPYKSGSGSSDNAAEAVSSAAAEEPAAAATSAAA). Positions 249 to 270 (AAEAVSSAAAEEPAAAATSAAA) are enriched in low complexity.

The protein belongs to the polysaccharide monooxygenase AA9 family. Requires Cu(2+) as cofactor.

The protein resides in the secreted. The catalysed reaction is [(1-&gt;4)-beta-D-glucosyl]n+m + reduced acceptor + O2 = 4-dehydro-beta-D-glucosyl-[(1-&gt;4)-beta-D-glucosyl]n-1 + [(1-&gt;4)-beta-D-glucosyl]m + acceptor + H2O.. Lytic polysaccharide monooxygenase (LPMO) that depolymerizes crystalline and amorphous polysaccharides via the oxidation of scissile alpha- or beta-(1-4)-glycosidic bonds, yielding C1 and C4 oxidation products. Catalysis by LPMOs requires the reduction of the active-site copper from Cu(II) to Cu(I) by a reducing agent and H(2)O(2) or O(2) as a cosubstrate. Active on cellulose and on xyloglucan for deconstruction of plant biomass. The polypeptide is AA9 family lytic polysaccharide monooxygenase A (Geotrichum candidum (Oospora lactis)).